Reading from the N-terminus, the 1274-residue chain is Mediator of RNA polymerase II transcription subunit 14 (1274 aa).

Disordered stretches follow at residues 1-40 (MENGHMNGVRTHHDRNSWTNGVNGGVAKREGSPDKGKAHA), 1056-1142 (LVGT…LHTQ), and 1155-1274 (AQRQ…VVID). Basic and acidic residues predominate over residues 27-37 (AKREGSPDKGK). Residues 1075–1085 (QDLQQGPQKTP) show a composition bias toward polar residues. Positions 1090-1104 (AAQAAQAAQAAQAAQ) are enriched in low complexity. A compositionally biased stretch (pro residues) spans 1108 to 1119 (PQRPKQQPPTPS). Composition is skewed to low complexity over residues 1120-1142 (QPQQQHRNVNQPQAQAQPQLHTQ), 1155-1172 (AQRQAQARANNSSNNNNT), and 1183-1252 (PQQR…PQGQ). Gly residues predominate over residues 1253-1265 (PGHGGGANGGMGG).

Belongs to the Mediator complex subunit 14 family. As to quaternary structure, component of the Mediator complex.

It is found in the nucleus. Functionally, component of the Mediator complex, a coactivator involved in the regulated transcription of nearly all RNA polymerase II-dependent genes. Mediator functions as a bridge to convey information from gene-specific regulatory proteins to the basal RNA polymerase II transcription machinery. Mediator is recruited to promoters by direct interactions with regulatory proteins and serves as a scaffold for the assembly of a functional preinitiation complex with RNA polymerase II and the general transcription factors. The protein is Mediator of RNA polymerase II transcription subunit 14 (rgr1) of Neurospora crassa (strain ATCC 24698 / 74-OR23-1A / CBS 708.71 / DSM 1257 / FGSC 987).